A 299-amino-acid chain; its full sequence is ATP phosphoribosyltransferase (299 aa).

Belongs to the ATP phosphoribosyltransferase family. Long subfamily. Equilibrium between an active dimeric form, an inactive hexameric form and higher aggregates. Interconversion between the various forms is largely reversible and is influenced by the natural substrates and inhibitors of the enzyme. The cofactor is Mg(2+).

It localises to the cytoplasm. The catalysed reaction is 1-(5-phospho-beta-D-ribosyl)-ATP + diphosphate = 5-phospho-alpha-D-ribose 1-diphosphate + ATP. It participates in amino-acid biosynthesis; L-histidine biosynthesis; L-histidine from 5-phospho-alpha-D-ribose 1-diphosphate: step 1/9. Its activity is regulated as follows. Feedback inhibited by histidine. Catalyzes the condensation of ATP and 5-phosphoribose 1-diphosphate to form N'-(5'-phosphoribosyl)-ATP (PR-ATP). Has a crucial role in the pathway because the rate of histidine biosynthesis seems to be controlled primarily by regulation of HisG enzymatic activity. The sequence is that of ATP phosphoribosyltransferase from Escherichia coli O8 (strain IAI1).